A 1487-amino-acid chain; its full sequence is Collagen alpha-1(II) chain (1487 aa).

The N-terminal stretch at 1 to 25 (MIRLGAPQTLVLLTLLVAAVLRCHG) is a signal peptide. A propeptide spans 26 to 181 (QDVQKAGSCV…PPGLGGNFAA (156 aa)) (N-terminal propeptide). Residues 32–90 (GSCVQDGQRYNDKDVWKPEPCRICVCDTGTVLCDDIICEDMKDCLSPETPFGECCPICS) enclose the VWFC domain. The interval 96–1234 (ASGQPGPKGQ…GLGQREKGPD (1139 aa)) is disordered. Basic and acidic residues-rich tracts occupy residues 105–116 (QKGEPGDIKDIV) and 133–154 (PRGD…RDGE). A compositionally biased stretch (pro residues) spans 158–173 (PGNPGPPGPPGPPGPP). Lysine 190 bears the 5-hydroxylysine mark. O-linked (Gal...) hydroxylysine glycosylation is present at lysine 190. Low complexity predominate over residues 192–203 (GGAQMGVMQGPM). The tract at residues 201-1214 (GPMGPMGPRG…PGPPGPPGPP (1014 aa)) is triple-helical region. Residues 208 to 217 (PRGPPGPAGA) are compositionally biased toward pro residues. A hydroxyproline mark is found at proline 212, proline 218, proline 230, proline 233, proline 245, proline 248, proline 251, proline 260, proline 269, proline 278, proline 281, and proline 284. The segment covering 218-239 (PGPQGFQGNPGEPGEPGVSGPM) has biased composition (low complexity). The span at 241–250 (PRGPPGPPGK) shows a compositional bias: pro residues. A compositionally biased stretch (basic and acidic residues) spans 251–265 (PGDDGEAGKPGKSGE). A 5-hydroxylysine modification is found at lysine 287. Lysine 287 is a glycosylation site (O-linked (Gal...) hydroxylysine). Position 293 is a hydroxyproline (proline 293). At lysine 299 the chain carries 5-hydroxylysine. A glycan (O-linked (Gal...) hydroxylysine) is linked at lysine 299. Proline 305 carries the post-translational modification Hydroxyproline. 5-hydroxylysine is present on lysine 308. Lysine 308 carries O-linked (Gal...) hydroxylysine glycosylation. Low complexity predominate over residues 310–320 (ESGSPGENGSP). 8 positions are modified to hydroxyproline: proline 314, proline 320, proline 329, proline 350, proline 356, proline 365, proline 368, and proline 371. Residues 335-350 (TGPAGAAGARGNDGQP) are compositionally biased toward low complexity. The span at 360–369 (GPAGGPGFPG) shows a compositional bias: gly residues. Composition is skewed to low complexity over residues 370-382 (APGA…PTGA) and 391-431 (PRGE…AGAP). Lysine 374 carries the 5-hydroxylysine modification. O-linked (Gal...) hydroxylysine glycosylation is present at lysine 374. A hydroxyproline mark is found at proline 395, proline 398, proline 401, proline 410, and proline 416. Lysine 419 carries the 5-hydroxylysine modification. Residues proline 425, proline 431, proline 434, and proline 440 each carry the hydroxyproline modification. Positions 433–442 (FPGPRGPPGP) are enriched in pro residues. Position 452 is a 5-hydroxylysine (lysine 452). Proline 458 is subject to Hydroxyproline. 2 positions are modified to 5-hydroxylysine: lysine 464 and lysine 470. Proline 473, proline 482, proline 497, proline 506, proline 512, and proline 518 each carry hydroxyproline. Lysine 527 carries the post-translational modification 5-hydroxylysine. Residue proline 530 is modified to Hydroxyproline. At lysine 542 the chain carries 5-hydroxylysine. Hydroxyproline occurs at positions 551, 557, 566, 581, 587, 590, 599, and 605. Lysine 608 is subject to 5-hydroxylysine. An O-linked (Gal...) hydroxylysine glycan is attached at lysine 608. Proline 614 is modified (hydroxyproline). 5-hydroxylysine is present on lysine 620. Lysine 620 is a glycosylation site (O-linked (Gal...) hydroxylysine). A compositionally biased stretch (low complexity) spans 622–631 (LPGAPGLRGL). Hydroxyproline occurs at positions 623, 626, 632, 644, 659, and 668. Residues 656-667 (QGAPGPSGFQGL) show a composition bias toward low complexity. 3-hydroxyproline is present on proline 670. Proline 671 and proline 674 each carry hydroxyproline. Over residues 721–736 (LPGTPGTDGPKGAAGP) the composition is skewed to low complexity. The segment covering 764-775 (KGDRGDVGEKGP) has biased composition (basic and acidic residues). Composition is skewed to low complexity over residues 833–848 (AGFA…PGAK) and 877–913 (PTGV…SNGN). Proline 907 carries the 3-hydroxyproline modification. Residues proline 908, proline 914, and proline 920 each carry the 4-hydroxyproline modification. Residues 1069 to 1079 (APGPPGSPGPA) are compositionally biased toward pro residues. Positions 1091 to 1109 (AGAQGPMGPAGPAGARGMP) are enriched in low complexity. Residues 1115–1129 (RGDKGETGEAGERGL) show a composition bias toward basic and acidic residues. A 5-hydroxylysine modification is found at lysine 1130. Lysine 1130 carries an O-linked (Gal...) hydroxylysine glycan. Proline 1144 carries the 3-hydroxyproline modification. The span at 1148 to 1157 (SGDQGASGPA) shows a compositional bias: low complexity. Proline 1181 carries the post-translational modification 4-hydroxyproline. 3-hydroxyproline is present on proline 1186. 4-hydroxyproline is present on proline 1187. A compositionally biased stretch (pro residues) spans 1199 to 1216 (AGPPGNPGPPGPPGPPGP). Proline 1201 is subject to 3-hydroxyproline. 4-hydroxyproline occurs at positions 1202 and 1205. Proline 1207 bears the 3-hydroxyproline mark. 4-hydroxyproline occurs at positions 1208 and 1211. Proline 1213 is subject to 3-hydroxyproline. Proline 1214 is subject to 4-hydroxyproline. A nonhelical region (C-terminal) region spans residues 1215-1241 (GPGIDMSAFAGLGQREKGPDPLQYMRA). A Fibrillar collagen NC1 domain is found at 1253–1487 (AEVDATLKSL…GVDIGPVCFL (235 aa)). Cystine bridges form between cysteine 1283–cysteine 1315, cysteine 1323–cysteine 1485, and cysteine 1393–cysteine 1438. Ca(2+)-binding residues include aspartate 1301, asparagine 1303, glutamine 1304, cysteine 1306, and aspartate 1309. The N-linked (GlcNAc...) asparagine glycan is linked to asparagine 1388.

This sequence belongs to the fibrillar collagen family. In terms of assembly, homotrimers of alpha 1(II) chains. Probably 3-hydroxylated on prolines by LEPREL1. Proline residues at the third position of the tripeptide repeating unit (G-X-P) are hydroxylated in some or all of the chains. Proline residues at the second position of the tripeptide repeating unit (G-P-X) are hydroxylated in some of the chains. Post-translationally, O-linked glycans consist of Glc-Gal disaccharides bound to the oxygen atom of post-translationally added hydroxyl groups. In terms of processing, contains mostly 4-hydroxyproline. Prolines at the third position of the tripeptide repeating unit (G-X-P) are 4-hydroxylated in some or all of the chains. Contains 3-hydroxyproline at a few sites. This modification occurs on the first proline residue in the sequence motif Gly-Pro-Hyp, where Hyp is 4-hydroxyproline. Post-translationally, lysine residues at the third position of the tripeptide repeating unit (G-X-Y) are 5-hydroxylated in some or all of the chains. In terms of processing, O-glycosylated on hydroxylated lysine residues. The O-linked glycan consists of a Glc-Gal disaccharide.

It localises to the secreted. The protein localises to the extracellular space. Its subcellular location is the extracellular matrix. Functionally, type II collagen is specific for cartilaginous tissues. It is essential for the normal embryonic development of the skeleton, for linear growth and for the ability of cartilage to resist compressive forces. The sequence is that of Collagen alpha-1(II) chain from Bos taurus (Bovine).